Reading from the N-terminus, the 285-residue chain is Small ribosomal subunit biogenesis GTPase RsgA (285 aa).

The CP-type G domain maps to 61–215; that stretch reads KNQLIRPKVA…IIDSPGFSSF (155 aa). GTP contacts are provided by residues 110 to 113 and 159 to 167; these read TKID and GQTGVGKTS. Residues C239, C244, H246, and C254 each coordinate Zn(2+).

Belongs to the TRAFAC class YlqF/YawG GTPase family. RsgA subfamily. As to quaternary structure, monomer. Associates with 30S ribosomal subunit, binds 16S rRNA. Zn(2+) is required as a cofactor.

It is found in the cytoplasm. One of several proteins that assist in the late maturation steps of the functional core of the 30S ribosomal subunit. Helps release RbfA from mature subunits. May play a role in the assembly of ribosomal proteins into the subunit. Circularly permuted GTPase that catalyzes slow GTP hydrolysis, GTPase activity is stimulated by the 30S ribosomal subunit. The sequence is that of Small ribosomal subunit biogenesis GTPase RsgA from Mesomycoplasma hyopneumoniae (strain J / ATCC 25934 / NCTC 10110) (Mycoplasma hyopneumoniae).